Consider the following 25-residue polypeptide: Dermaseptin-5.2TR (25 aa).

A Valine amide modification is found at Val25.

Expressed by the skin glands.

It localises to the secreted. Functionally, has antimicrobial activity. The polypeptide is Dermaseptin-5.2TR (Phyllomedusa trinitatis (Trinidad leaf frog)).